A 39-amino-acid polypeptide reads, in one-letter code: Photosystem II reaction center protein J (39 aa).

Residues 9-29 (LWLVATVGGIAAITVLGIFIY) form a helical membrane-spanning segment.

The protein belongs to the PsbJ family. As to quaternary structure, PSII is composed of 1 copy each of membrane proteins PsbA, PsbB, PsbC, PsbD, PsbE, PsbF, PsbH, PsbI, PsbJ, PsbK, PsbL, PsbM, PsbT, PsbX, PsbY, PsbZ, Psb30/Ycf12, at least 3 peripheral proteins of the oxygen-evolving complex and a large number of cofactors. It forms dimeric complexes.

Its subcellular location is the plastid. The protein resides in the chloroplast thylakoid membrane. Its function is as follows. One of the components of the core complex of photosystem II (PSII). PSII is a light-driven water:plastoquinone oxidoreductase that uses light energy to abstract electrons from H(2)O, generating O(2) and a proton gradient subsequently used for ATP formation. It consists of a core antenna complex that captures photons, and an electron transfer chain that converts photonic excitation into a charge separation. This is Photosystem II reaction center protein J from Pyropia yezoensis (Susabi-nori).